A 174-amino-acid polypeptide reads, in one-letter code: Repair DNA polymerase X (174 aa).

The involved in ssDNA binding stretch occupies residues 42-51 (REEKMLNDVD). Mg(2+)-binding residues include Asp49 and Asp51. Cys81 and Cys86 form a disulfide bridge. A Mg(2+)-binding site is contributed by Asp100.

It belongs to the DNA polymerase type-X family. Requires Mg(2+) as cofactor.

Its subcellular location is the virion. It catalyses the reaction DNA(n) + a 2'-deoxyribonucleoside 5'-triphosphate = DNA(n+1) + diphosphate. Its function is as follows. Error-prone polymerase lacking a proofreading 3'-5' exonuclease which catalyzes the gap-filling reaction during the DNA repair process. Specifically binds intermediates in the single-nucleotide base-excision repair process. Also catalyzes DNA polymerization with low nucleotide-insertion fidelity. Probably acts as a strategic DNA mutase, which gives rise to a rapid emergence of variants. Generates mismatched G-G pairs, in that case, the polymerase first binds the deoxynucleotide followed by mismatch formation. Together with the viral DNA ligase, fills the single nucleotide gaps generated by the AP endonuclease. Binds DNA with high affinity via the helix alphaE. The polypeptide is Repair DNA polymerase X (Ornithodoros (relapsing fever ticks)).